A 367-amino-acid polypeptide reads, in one-letter code: Alginate lyase (367 aa).

A signal peptide spans Met-1–Ala-27. Substrate is bound by residues Ser-65–Lys-66, His-138–Thr-139, and Tyr-256.

It belongs to the polysaccharide lyase 5 family.

The protein resides in the periplasm. It carries out the reaction Eliminative cleavage of alginate to give oligosaccharides with 4-deoxy-alpha-L-erythro-hex-4-enuronosyl groups at their non-reducing ends and beta-D-mannuronate at their reducing end.. In terms of biological role, catalyzes the depolymerization of alginate by cleaving the beta-1,4 glycosidic bond between two adjacent sugar residues via a beta-elimination mechanism. May serve to degrade mislocalized alginate that is trapped in the periplasmic space. This is Alginate lyase from Pseudomonas aeruginosa (strain LESB58).